The sequence spans 247 residues: 14-3-3 protein gamma-B (247 aa).

The protein belongs to the 14-3-3 family. In terms of assembly, homodimer, and heterodimer with other family members.

Its subcellular location is the cytoplasm. Adapter protein implicated in the regulation of a large spectrum of both general and specialized signaling pathways. Binds to a large number of partners, usually by recognition of a phosphoserine or phosphothreonine motif. Binding generally results in the modulation of the activity of the binding partner. The protein is 14-3-3 protein gamma-B (ywhag-b) of Xenopus laevis (African clawed frog).